The following is a 202-amino-acid chain: Ribonuclease HII (202 aa).

One can recognise an RNase H type-2 domain in the interval 13 to 202; that stretch reads KIEAGLDEAG…HFKPKQLDLF (190 aa). 3 residues coordinate a divalent metal cation: D19, E20, and D112.

This sequence belongs to the RNase HII family. It depends on Mn(2+) as a cofactor. The cofactor is Mg(2+).

Its subcellular location is the cytoplasm. It catalyses the reaction Endonucleolytic cleavage to 5'-phosphomonoester.. Endonuclease that specifically degrades the RNA of RNA-DNA hybrids. The polypeptide is Ribonuclease HII (Cytophaga hutchinsonii (strain ATCC 33406 / DSM 1761 / CIP 103989 / NBRC 15051 / NCIMB 9469 / D465)).